The primary structure comprises 288 residues: Diaminopimelate epimerase (288 aa).

Residues Asn13, Gln51, and Asn71 each contribute to the substrate site. The active-site Proton donor is the Cys80. Substrate is bound by residues 81–82, Asn166, Asn200, and 218–219; these read GN and ER. Cys227 functions as the Proton acceptor in the catalytic mechanism. 228–229 is a binding site for substrate; it reads GT.

This sequence belongs to the diaminopimelate epimerase family. In terms of assembly, homodimer.

The protein localises to the cytoplasm. The catalysed reaction is (2S,6S)-2,6-diaminopimelate = meso-2,6-diaminopimelate. The protein operates within amino-acid biosynthesis; L-lysine biosynthesis via DAP pathway; DL-2,6-diaminopimelate from LL-2,6-diaminopimelate: step 1/1. Its function is as follows. Catalyzes the stereoinversion of LL-2,6-diaminopimelate (L,L-DAP) to meso-diaminopimelate (meso-DAP), a precursor of L-lysine and an essential component of the bacterial peptidoglycan. The sequence is that of Diaminopimelate epimerase from Caulobacter vibrioides (strain ATCC 19089 / CIP 103742 / CB 15) (Caulobacter crescentus).